A 191-amino-acid polypeptide reads, in one-letter code: Probable GTP-binding protein EngB (191 aa).

The 170-residue stretch at 19–188 (NIPEICFMGR…HKKIFELFVE (170 aa)) folds into the EngB-type G domain. Residues 27–34 (GRSNVGKS), 53–57 (GRTQL), 70–73 (DLPG), 136–139 (NKFD), and 167–169 (AST) contribute to the GTP site. Positions 34 and 55 each coordinate Mg(2+).

It belongs to the TRAFAC class TrmE-Era-EngA-EngB-Septin-like GTPase superfamily. EngB GTPase family. Mg(2+) serves as cofactor.

Necessary for normal cell division and for the maintenance of normal septation. This Mycoplasma genitalium (strain ATCC 33530 / DSM 19775 / NCTC 10195 / G37) (Mycoplasmoides genitalium) protein is Probable GTP-binding protein EngB.